We begin with the raw amino-acid sequence, 131 residues long: Global transcriptional regulator Spx (131 aa).

An intrachain disulfide couples C10 to C13.

This sequence belongs to the ArsC family. Spx subfamily. Interacts with the C-terminal domain of the alpha subunit of the RNAP.

Its subcellular location is the cytoplasm. Functionally, global transcriptional regulator that plays a key role in stress response and exerts either positive or negative regulation of genes. Acts by interacting with the C-terminal domain of the alpha subunit of the RNA polymerase (RNAP). This interaction can enhance binding of RNAP to the promoter region of target genes and stimulate their transcription, or block interaction of RNAP with activator. The polypeptide is Global transcriptional regulator Spx (Shouchella clausii (strain KSM-K16) (Alkalihalobacillus clausii)).